A 238-amino-acid chain; its full sequence is Probable xyloglucan-specific endo-beta-1,4-glucanase A (238 aa).

The signal sequence occupies residues 1–18 (MKLSLSVALSLAASTAQA). N-linked (GlcNAc...) asparagine glycans are attached at residues asparagine 106 and asparagine 171.

Belongs to the glycosyl hydrolase 12 (cellulase H) family.

Its subcellular location is the secreted. It carries out the reaction xyloglucan + H2O = xyloglucan oligosaccharides.. Catalyzes endohydrolysis of 1,4-beta-D-glucosidic linkages in xyloglucan with retention of the beta-configuration of the glycosyl residues. Specific for xyloglucan and does not hydrolyze other cell wall components. In Aspergillus fumigatus (strain ATCC MYA-4609 / CBS 101355 / FGSC A1100 / Af293) (Neosartorya fumigata), this protein is Probable xyloglucan-specific endo-beta-1,4-glucanase A (xgeA).